Reading from the N-terminus, the 1543-residue chain is ATP-binding cassette sub-family C member 2 (1543 aa).

The Extracellular portion of the chain corresponds to 1-26; sequence MDEFCNSTFWNLSLLKSPEADLPLCF. N-linked (GlcNAc...) asparagine glycosylation is found at Asn6 and Asn11. Residues 27-47 traverse the membrane as a helical segment; the sequence is EQTVLVWIPLGFLWLLAPWQL. Residues 48 to 67 lie on the Cytoplasmic side of the membrane; the sequence is YRIYRSRTKRFAITKFYLAK. Residues 68–88 traverse the membrane as a helical segment; sequence QVFVVCLLILAAIDLSLALTE. Residues 89 to 92 are Extracellular-facing; sequence DTGQ. The helical transmembrane segment at 93–113 threads the bilayer; sequence ATIPPVKYTNPILYLCTWLLV. Over 114-125 the chain is Cytoplasmic; that stretch reads LVIQHCRQCCIQ. A helical membrane pass occupies residues 126–146; it reads KNSWFLSMFWILSLLCGIFQF. Topologically, residues 147–164 are extracellular; that stretch reads QTLIRALLQDSKSNMTYS. Residue Asn160 is glycosylated (N-linked (GlcNAc...) asparagine). The chain crosses the membrane as a helical span at residues 165–185; that stretch reads CLFFVSYGFQIVILILSAFSE. Residues 186-311 are Cytoplasmic-facing; sequence SSDSTHAPSA…DFPKSWLVKA (126 aa). Residues 260-285 form a disordered region; it reads LKKSQQSPEGTSHGLTKKQSQSQDVL. The span at 263 to 283 shows a compositional bias: polar residues; sequence SQQSPEGTSHGLTKKQSQSQD. Phosphoserine is present on residues Ser279 and Ser281. Residues 312–332 traverse the membrane as a helical segment; it reads LFKTFYVVILKSFILKLAHDI. An ABC transmembrane type-1 1 domain is found at 320–603; the sequence is ILKSFILKLA…LPMVISSVIQ (284 aa). The Extracellular portion of the chain corresponds to 333–358; that stretch reads LLFLNPQLLKFLIGFVKDPDSYPWVG. The helical transmembrane segment at 359–379 threads the bilayer; sequence YIYAILMFSVTLIQSFFLQCY. Residues 380 to 435 are Cytoplasmic-facing; the sequence is FQFCFVLGMTVRTTIIASVYKKALTLSNLARRQYTIGETVNLMSVDSQKLMDVTNY. A helical transmembrane segment spans residues 436-456; that stretch reads IHLLWSSVLQIALSIFFLWRE. Topologically, residues 457–459 are extracellular; that stretch reads LGP. Residues 460–480 form a helical membrane-spanning segment; sequence SILAGVGLMVLLVPVNGVLAT. The Cytoplasmic portion of the chain corresponds to 481–542; it reads KIRKIQVQNM…NLLRFSQLQT (62 aa). Residues 543–563 traverse the membrane as a helical segment; it reads ILIFILHLTPTLVSVITFSVY. The Extracellular segment spans residues 564-585; the sequence is VLVDSQNVLNAEKAFTSITLFN. A helical membrane pass occupies residues 586-606; it reads ILRFPLAMLPMVISSVIQASV. Topologically, residues 607–969 are cytoplasmic; it reads SVDRLEQYLG…VKFSIYLKYL (363 aa). An ABC transporter 1 domain is found at 635 to 859; that stretch reads VQFSEASFTW…KGVFAKNWKT (225 aa). 669–676 lines the ATP pocket; that stretch reads GTVGSGKS. Position 876 is a phosphoserine (Ser876). Residues 903–927 are disordered; sequence RENSLRRTLSRSSRSGSRRGKSLKS. Residues 908 to 917 show a composition bias toward low complexity; it reads RRTLSRSSRS. 2 positions are modified to phosphoserine: Ser924 and Ser928. The helical transmembrane segment at 970 to 990 threads the bilayer; that stretch reads QAVGWWSLLFIVIFYVLNYVA. The 286-residue stretch at 977–1262 folds into the ABC transmembrane type-1 2 domain; that stretch reads LLFIVIFYVL…LVRMTSEVET (286 aa). At 991-1031 the chain is on the extracellular side; that stretch reads FIGTNLWLSAWTSDSEKQNGTDNSPSQRDMRIGVFGALGIA. Asn1009 is a glycosylation site (N-linked (GlcNAc...) asparagine). A helical transmembrane segment spans residues 1032–1052; that stretch reads QGIFLLSSSLWSIYACRNASK. Residues 1053–1095 lie on the Cytoplasmic side of the membrane; the sequence is TLHRQLLTNILRAPMSFFDTTPTGRIVNRFAGDISTVDDTLPQ. The helical transmembrane segment at 1096–1116 threads the bilayer; that stretch reads TLRSWLLCFFGIVSTLVMICM. Residue Ala1117 is a topological domain, extracellular. The helical transmembrane segment at 1118–1138 threads the bilayer; the sequence is TPIFIIIIIPLSILYVSVQVF. At 1139-1209 the chain is on the cytoplasmic side; it reads YVATSRQLRR…TSNRWLAIRL (71 aa). The helical transmembrane segment at 1210-1230 threads the bilayer; the sequence is ELVGNLIVFCSALLLVIYKNS. Residues 1231-1232 are Extracellular-facing; the sequence is LT. Residues 1233-1253 form a helical membrane-spanning segment; that stretch reads GDTVGFVLSNALNITQTLNWL. The Cytoplasmic segment spans residues 1254–1543; sequence VRMTSEVETN…GIESVNHTEL (290 aa). The region spanning 1298 to 1532 is the ABC transporter 2 domain; sequence IQFNNYQVRY…MGPFYLMAKE (235 aa). 1332-1339 is an ATP binding site; the sequence is GRTGAGKS. At Ser1436 the chain carries Phosphoserine.

The protein belongs to the ABC transporter superfamily. ABCC family. Conjugate transporter (TC 3.A.1.208) subfamily. In terms of tissue distribution, expressed in liver.

The protein localises to the apical cell membrane. The catalysed reaction is an S-substituted glutathione(in) + ATP + H2O = an S-substituted glutathione(out) + ADP + phosphate + H(+). It catalyses the reaction taurolithocholate 3-sulfate(in) + ATP + H2O = taurolithocholate 3-sulfate(out) + ADP + phosphate + H(+). The enzyme catalyses ATP + H2O + xenobioticSide 1 = ADP + phosphate + xenobioticSide 2.. It carries out the reaction leukotriene C4(in) + ATP + H2O = leukotriene C4(out) + ADP + phosphate + H(+). The catalysed reaction is 17beta-estradiol 17-O-(beta-D-glucuronate)(in) + ATP + H2O = 17beta-estradiol 17-O-(beta-D-glucuronate)(out) + ADP + phosphate + H(+). It catalyses the reaction (4Z,15Z)-bilirubin IXalpha C8-beta-D-glucuronoside(in) + ATP + H2O = (4Z,15Z)-bilirubin IXalpha C8-beta-D-glucuronoside(out) + ADP + phosphate + H(+). The enzyme catalyses (4Z,15Z)-bilirubin IXalpha C8,C12-beta-D-bisglucuronoside(in) + ATP + H2O = (4Z,15Z)-bilirubin IXalpha C8,C12-beta-D-bisglucuronoside(out) + ADP + phosphate + H(+). ATP-dependent transporter of the ATP-binding cassette (ABC) family that binds and hydrolyzes ATP to enable active transport of various substrates including many drugs, toxicants and endogenous compound across cell membranes. Transports a wide variety of conjugated organic anions such as sulfate-, glucuronide- and glutathione (GSH)-conjugates of endo- and xenobiotics substrates. Mediates hepatobiliary excretion of mono- and bis-glucuronidated bilirubin molecules and therefore play an important role in bilirubin detoxification. Mediates also hepatobiliary excretion of others glucuronide conjugates such as 17beta-estradiol 17-glucosiduronic acid and leukotriene C4. Transports sulfated bile salt such as taurolithocholate sulfate. Transports various anticancer drugs, such as anthracycline, vinca alkaloid and methotrexate and HIV-drugs such as protease inhibitors. The polypeptide is ATP-binding cassette sub-family C member 2 (Mus musculus (Mouse)).